We begin with the raw amino-acid sequence, 503 residues long: uncharacterized protein (503 aa).

Positions 437–465 form a coiled coil; it reads LNKDLILENLIETENENDKQEFQKLLRTI.

Belongs to the IIV-6 467R family.

This is an uncharacterized protein from Invertebrate iridescent virus 6 (IIV-6).